The following is a 251-amino-acid chain: Flap endonuclease Xni (251 aa).

Asp104 serves as a coordination point for Mg(2+). The 5'-3' exonuclease domain maps to Val160–Lys250. Residues Leu171, Ala172, Pro180, Val182, and Ile185 each contribute to the K(+) site. The segment at Gly184–Ser189 is interaction with DNA.

This sequence belongs to the Xni family. It depends on Mg(2+) as a cofactor. Requires K(+) as cofactor.

In terms of biological role, has flap endonuclease activity. During DNA replication, flap endonucleases cleave the 5'-overhanging flap structure that is generated by displacement synthesis when DNA polymerase encounters the 5'-end of a downstream Okazaki fragment. The protein is Flap endonuclease Xni of Escherichia fergusonii (strain ATCC 35469 / DSM 13698 / CCUG 18766 / IAM 14443 / JCM 21226 / LMG 7866 / NBRC 102419 / NCTC 12128 / CDC 0568-73).